Reading from the N-terminus, the 253-residue chain is HTH-type transcriptional regulator AdiY (253 aa).

An HTH araC/xylS-type domain is found at 149-246; that stretch reads DSVYQIIESD…GMTPLHYVSQ (98 aa). 2 DNA-binding regions (H-T-H motif) span residues 166-187 and 213-236; these read SMVA…KSEN and ISQV…KDFY.

In Escherichia coli (strain K12), this protein is HTH-type transcriptional regulator AdiY (adiY).